A 320-amino-acid polypeptide reads, in one-letter code: Cytochrome f (320 aa).

The signal sequence occupies residues 1-35; that stretch reads MQIRNTFSSLKGEITRFISVSLMIYIITRASISNA. The heme site is built by tyrosine 36, cysteine 56, cysteine 59, and histidine 60. The helical transmembrane segment at 286-306 threads the bilayer; sequence VQGLLFFLASVVLAQIFLVLK.

This sequence belongs to the cytochrome f family. The 4 large subunits of the cytochrome b6-f complex are cytochrome b6, subunit IV (17 kDa polypeptide, petD), cytochrome f and the Rieske protein, while the 4 small subunits are PetG, PetL, PetM and PetN. The complex functions as a dimer. It depends on heme as a cofactor.

It localises to the plastid. Its subcellular location is the chloroplast thylakoid membrane. Component of the cytochrome b6-f complex, which mediates electron transfer between photosystem II (PSII) and photosystem I (PSI), cyclic electron flow around PSI, and state transitions. The protein is Cytochrome f of Citrus sinensis (Sweet orange).